The primary structure comprises 163 residues: UPF0587 protein CG4646 (163 aa).

4 residues coordinate Zn(2+): cysteine 33, cysteine 36, cysteine 68, and cysteine 71.

This sequence belongs to the UPF0587 family.

This Drosophila melanogaster (Fruit fly) protein is UPF0587 protein CG4646.